Reading from the N-terminus, the 604-residue chain is Glutamine--fructose-6-phosphate aminotransferase [isomerizing] (604 aa).

C2 serves as the catalytic Nucleophile; for GATase activity. The Glutamine amidotransferase type-2 domain maps to 2–218; that stretch reads CGIVGVVGNR…DKELVILTKD (217 aa). 2 consecutive SIS domains span residues 284–423 and 456–594; these read IVKT…ANGK and VEKL…VDKP. The For Fru-6P isomerization activity role is filled by K599.

As to quaternary structure, homodimer.

The protein localises to the cytoplasm. It carries out the reaction D-fructose 6-phosphate + L-glutamine = D-glucosamine 6-phosphate + L-glutamate. Functionally, catalyzes the first step in hexosamine metabolism, converting fructose-6P into glucosamine-6P using glutamine as a nitrogen source. In Streptococcus pyogenes serotype M6 (strain ATCC BAA-946 / MGAS10394), this protein is Glutamine--fructose-6-phosphate aminotransferase [isomerizing].